The chain runs to 306 residues: Reaction center protein M chain (306 aa).

3 helical membrane passes run glycine 53–asparagine 79, glycine 111–lysine 140, and threonine 143–glycine 168. 2 residues coordinate (7R,8Z)-bacteriochlorophyll b: histidine 181 and histidine 201. Residues asparagine 198 to serine 226 form a helical membrane-spanning segment. Residues histidine 218 and glutamate 233 each coordinate Fe cation. Tryptophan 251 provides a ligand contact to a ubiquinone. The helical transmembrane segment at threonine 260–threonine 286 threads the bilayer. Fe cation is bound at residue histidine 265.

It belongs to the reaction center PufL/M/PsbA/D family. In terms of assembly, reaction center is composed of four bacteriochlorophylls, two bacteriopheophytins, two ubiquinones, one iron, and three highly hydrophobic polypeptide chains (designated L, M, and H).

It is found in the cellular chromatophore membrane. The reaction center is a membrane-bound complex that mediates the initial photochemical event in the electron transfer process of photosynthesis. This chain is Reaction center protein M chain (pufM), found in Rhodospirillum rubrum.